The chain runs to 90 residues: uncharacterized protein (90 aa).

This is an uncharacterized protein from Methanocaldococcus jannaschii (strain ATCC 43067 / DSM 2661 / JAL-1 / JCM 10045 / NBRC 100440) (Methanococcus jannaschii).